Reading from the N-terminus, the 700-residue chain is Acyl-coenzyme A oxidase 3 (700 aa).

It belongs to the acyl-CoA oxidase family. As to quaternary structure, heteropentamer composed of five different subunits. FAD is required as a cofactor.

It localises to the peroxisome. It carries out the reaction a 2,3-saturated acyl-CoA + O2 = a (2E)-enoyl-CoA + H2O2. It participates in lipid metabolism; peroxisomal fatty acid beta-oxidation. Functionally, oxidizes aliphatic acyl-CoA substrates of different chain lengths such as hexanoyl-CoA, decanoyl-CoA and myristoyl-CoA as well as aromatic/heterocyclic ring-substituted chromogenic substrates, such as furylpropionyl-CoA. Of the above substrates, the efficiency of the enzyme, exhibits the following order: decanoyl-CoA &gt; myristoyl-CoA &gt; hexanoyl-CoA &gt; furyl-propionyl-CoA. The chain is Acyl-coenzyme A oxidase 3 (POX3) from Yarrowia lipolytica (strain CLIB 122 / E 150) (Yeast).